A 346-amino-acid chain; its full sequence is MGLAAPKNKRKLGNDPNNTRWSRNTENFGHRMLRSQGWEPGQYLGPQDASHAVYHTAASASHIKVALKEDNLGLGAKMNRGDECTGLNAFKEMLARLNGKSEAAIEKDKKAREAHAMNVYVERKFGTMRFVSGGFLVGDVIQEKKEDAEAESTDGTPEPAEATVKKEKKRKAGRDDDDEAQSKEERRRAKKQKKSMKETGSGGDDVTSEEDSAKSKSKKSHKSKKEKKRRKEEPASDEQESEDEESREKRRKKEKKERKERRREKREKKLKKKQQREEDSSSSEANSDDETTGVDTGASTPVASGTSTPVSQVSVRHLARRRFIAQKRMAMKDQQALNQIFMIKSS.

2 disordered regions span residues 1–27 (MGLA…NTEN) and 146–315 (EDAE…QVSV). A compositionally biased stretch (polar residues) spans 15 to 27 (DPNNTRWSRNTEN). Positions 25 to 79 (TENFGHRMLRSQGWEPGQYLGPQDASHAVYHTAASASHIKVALKEDNLGLGAKMN) constitute a G-patch domain. A compositionally biased stretch (basic residues) spans 215-230 (SKSKKSHKSKKEKKRR). Residues 235–245 (ASDEQESEDEE) are compositionally biased toward acidic residues. Residues 249–274 (KRRKKEKKERKERRREKREKKLKKKQ) show a composition bias toward basic residues. Polar residues predominate over residues 293–314 (GVDTGASTPVASGTSTPVSQVS).

This sequence belongs to the PINX1 family.

The protein localises to the nucleus. The protein resides in the nucleolus. Functionally, involved in rRNA-processing at A0, A1 and A2 sites and negatively regulates telomerase. The protein is Protein PXR1 (PXR1) of Pyricularia oryzae (strain 70-15 / ATCC MYA-4617 / FGSC 8958) (Rice blast fungus).